We begin with the raw amino-acid sequence, 276 residues long: Type II pantothenate kinase (276 aa).

Position 8-15 (8-15 (DAGGTLTK)) interacts with ATP. Residue Glu76 is the Proton acceptor of the active site. ATP is bound by residues Thr105, 127 to 131 (GGTIM), Phe143, and Ser230.

Belongs to the type II pantothenate kinase family. Homodimer.

It is found in the cytoplasm. The catalysed reaction is (R)-pantothenate + ATP = (R)-4'-phosphopantothenate + ADP + H(+). Its pathway is cofactor biosynthesis; coenzyme A biosynthesis; CoA from (R)-pantothenate: step 1/5. Functionally, catalyzes the phosphorylation of pantothenate (Pan), the first step in CoA biosynthesis. The protein is Type II pantothenate kinase of Bacillus anthracis.